We begin with the raw amino-acid sequence, 382 residues long: Adenosine 3'-phospho 5'-phosphosulfate transporter 2 (382 aa).

Over residues 1–10 the composition is skewed to polar residues; it reads MSVSNRNGNG. The tract at residues 1 to 33 is disordered; that stretch reads MSVSNRNGNGSEVIYVGDRSTNRPPRNAPSPDE. The next 10 helical transmembrane spans lie at 56-76, 83-103, 121-141, 144-164, 170-190, 197-217, 234-254, 271-291, 299-319, and 323-343; these read LCCA…ELIF, PYGW…GYVE, VLLA…LGYL, PTQV…SILI, GPLD…FTLA, NFNP…AAIG, VVIY…LLTG, FGYA…VLTL, LAAT…FVFF, and FTIN…LNVY.

The protein belongs to the nucleotide-sugar transporter family. SLC35B subfamily.

Its subcellular location is the golgi apparatus membrane. Functionally, mediates the transport of adenosine 3'-phospho 5'-phosphosulfate (PAPS), from cytosol into Golgi. PAPS is a universal sulfuryl donor for sulfation events that take place in the Golgi. Essential for viability. Involved in glycosaminoglycan synthesis and the subsequent signaling. May be involved in hh and dpp signaling by controlling the sulfation of heparan sulfate (HS). The polypeptide is Adenosine 3'-phospho 5'-phosphosulfate transporter 2 (Aedes aegypti (Yellowfever mosquito)).